The chain runs to 488 residues: MTTLMVQGTTSDAGKSTLVTALCRWATRQGVAVVPFKPQNMALNSAVTADGGEIGRAQAVQAQAAFLEPHTDMNPVLLKPNSDTGAQVIIHGRAVTSMNAVAYHDYKAIAMQAVLASHERLSAAYPLVMVEGAGSPAEINLRAGDIANMGFAEAVDCPVLLIADINRGGVFAHLVGTLELLSPSEQARIKGFIINRFRGDIALLQPGLDWLEQRTGKPVVGVLPYVMDLHLEAEDGIDQRQTDKAEQVLKVVVPVLPRISNHTDFDPLRLHPQVDLQFIGPGQAIPPADLIILPGSKSVRSDLAYLRANGWESAIRRHLRYGGKLLGICGGLQMLGEQVHDPLGLEGAPGSSAGLGLLAFETQLEAEKQLRNVRGRLALEDAEVSGYEIHAGVTTGAALEKAAVHLDDGRCDGAQSLDGQIFGTYLHGLFESPAASAALLRWAGLYDVQEVDYHGLRERDIERLADLVEKHLDTGLLRELCGISPCSS.

The region spanning 248-435 (VLKVVVPVLP…LHGLFESPAA (188 aa)) is the GATase cobBQ-type domain. The active-site Nucleophile is Cys329. His427 is an active-site residue.

It belongs to the CobB/CobQ family. CobQ subfamily.

It participates in cofactor biosynthesis; adenosylcobalamin biosynthesis. Functionally, catalyzes amidations at positions B, D, E, and G on adenosylcobyrinic A,C-diamide. NH(2) groups are provided by glutamine, and one molecule of ATP is hydrogenolyzed for each amidation. The polypeptide is Cobyric acid synthase (Pseudomonas fluorescens (strain Pf0-1)).